Reading from the N-terminus, the 89-residue chain is Small ribosomal subunit protein uS15 (89 aa).

It belongs to the universal ribosomal protein uS15 family. Part of the 30S ribosomal subunit. Forms a bridge to the 50S subunit in the 70S ribosome, contacting the 23S rRNA.

Its function is as follows. One of the primary rRNA binding proteins, it binds directly to 16S rRNA where it helps nucleate assembly of the platform of the 30S subunit by binding and bridging several RNA helices of the 16S rRNA. Forms an intersubunit bridge (bridge B4) with the 23S rRNA of the 50S subunit in the ribosome. The protein is Small ribosomal subunit protein uS15 of Pseudoalteromonas atlantica (strain T6c / ATCC BAA-1087).